A 1353-amino-acid polypeptide reads, in one-letter code: Inhibitor of Bruton tyrosine kinase (1353 aa).

ANK repeat units follow at residues 51–80 (FGRN…DLLV) and 85–114 (SGWT…SLYI). RCC1 repeat units lie at residues 141–194 (PTDV…FLSQ), 195–246 (KGQV…VLTE), and 248–301 (GCVY…LWTR). BTB domains lie at 564-644 (HDVT…DFLT) and 768-836 (CDVT…VVIK). The stretch at 806 to 835 (SSCAALEMPIHSDILKVILDYLYTDEAVVI) is one ANK 3 repeat. A disordered region spans residues 970-1001 (HSETMFKKAKTKAKKKPRKRSDSSGGYNLSDI). Residues 976 to 988 (KKAKTKAKKKPRK) show a composition bias toward basic residues. Ser990 carries the post-translational modification Phosphoserine. Residues 992 to 1001 (SSGGYNLSDI) show a composition bias toward polar residues. 10 positions are modified to phosphoserine: Ser1004, Ser1030, Ser1033, Ser1039, Ser1045, Ser1054, Ser1083, Ser1111, Ser1113, and Ser1116. The interval 1134–1155 (KCGATPKSHLGKTVSHGVKLSQ) is disordered.

Interacts with the PH domain of BTK. Isoform 2 does not interact with BTK. As to expression, expressed in DeFew, HEK293T, HeLa and in Jurkat, MC3 and NB4 lymphoid cells (at protein level). Isoform 1 is the predominant isoform expressed in all examined tissues and cell lines. Highly expressed in hemopoietic tissues (fetal liver, spleen, lymph node, thymus, peripheral blood leukocytes and bone marrow). Weakly or not expressed in other tissues.

It is found in the cytoplasm. It localises to the membrane. The protein localises to the nucleus. Acts as an inhibitor of BTK tyrosine kinase activity, thereby playing a role in B-cell development. Down-regulates BTK kinase activity, leading to interference with BTK-mediated calcium mobilization and NF-kappa-B-driven transcription. This Homo sapiens (Human) protein is Inhibitor of Bruton tyrosine kinase (IBTK).